A 503-amino-acid polypeptide reads, in one-letter code: Probable zinc metalloprotease UREG_01421 (503 aa).

Residues 1–24 (MHSLSSALAGSTFVLLFLCLLASA) form the signal peptide. Asn-105 carries N-linked (GlcNAc...) asparagine glycosylation. Residues His-176, Asp-196, and Glu-232 each contribute to the Zn(2+) site. A glycan (N-linked (GlcNAc...) asparagine) is linked at Asn-247. Residue Asp-259 participates in Zn(2+) binding. The Fibronectin type-III domain maps to 416–503 (MPRNVRVSTR…RGVAVLPFPA (88 aa)). The N-linked (GlcNAc...) asparagine glycan is linked to Asn-429.

It belongs to the peptidase M28 family. M28B subfamily. The cofactor is Zn(2+).

It localises to the secreted. This chain is Probable zinc metalloprotease UREG_01421, found in Uncinocarpus reesii (strain UAMH 1704).